Consider the following 435-residue polypeptide: Chaperone SurA (435 aa).

Positions 1–24 (MRLRSFAFLGFMLLVAMAPSMASA) are cleaved as a signal peptide. 2 consecutive PpiC domains span residues 173 to 274 (DTAY…KLID) and 286 to 385 (VTEN…ELED).

Its subcellular location is the periplasm. The enzyme catalyses [protein]-peptidylproline (omega=180) = [protein]-peptidylproline (omega=0). In terms of biological role, chaperone involved in the correct folding and assembly of outer membrane proteins. Recognizes specific patterns of aromatic residues and the orientation of their side chains, which are found more frequently in integral outer membrane proteins. May act in both early periplasmic and late outer membrane-associated steps of protein maturation. The chain is Chaperone SurA from Chromohalobacter salexigens (strain ATCC BAA-138 / DSM 3043 / CIP 106854 / NCIMB 13768 / 1H11).